The chain runs to 190 residues: Peptidyl-tRNA hydrolase (190 aa).

TRNA is bound at residue Tyr-14. The active-site Proton acceptor is the His-19. 3 residues coordinate tRNA: Tyr-64, Asn-66, and Asn-112.

The protein belongs to the PTH family. As to quaternary structure, monomer.

It localises to the cytoplasm. It catalyses the reaction an N-acyl-L-alpha-aminoacyl-tRNA + H2O = an N-acyl-L-amino acid + a tRNA + H(+). Hydrolyzes ribosome-free peptidyl-tRNAs (with 1 or more amino acids incorporated), which drop off the ribosome during protein synthesis, or as a result of ribosome stalling. In terms of biological role, catalyzes the release of premature peptidyl moieties from peptidyl-tRNA molecules trapped in stalled 50S ribosomal subunits, and thus maintains levels of free tRNAs and 50S ribosomes. This is Peptidyl-tRNA hydrolase from Chlorobaculum parvum (strain DSM 263 / NCIMB 8327) (Chlorobium vibrioforme subsp. thiosulfatophilum).